The sequence spans 123 residues: MPTINQLIRKERKKVAKRKKTPALQACPQRRGVCTRVYTTTPKKPNSALRKVARVRLTNAIEVTAYIPGEGHNLQEHSVVMIRGGRVKDLPGVRYHIVRGTLDTAGVQDRRQGRSKYGAKRPK.

Asp89 is modified (3-methylthioaspartic acid). Positions 104 to 123 (TAGVQDRRQGRSKYGAKRPK) are disordered. Residues 113 to 123 (GRSKYGAKRPK) are compositionally biased toward basic residues.

Belongs to the universal ribosomal protein uS12 family. Part of the 30S ribosomal subunit. Contacts proteins S8 and S17. May interact with IF1 in the 30S initiation complex.

With S4 and S5 plays an important role in translational accuracy. Its function is as follows. Interacts with and stabilizes bases of the 16S rRNA that are involved in tRNA selection in the A site and with the mRNA backbone. Located at the interface of the 30S and 50S subunits, it traverses the body of the 30S subunit contacting proteins on the other side and probably holding the rRNA structure together. The combined cluster of proteins S8, S12 and S17 appears to hold together the shoulder and platform of the 30S subunit. This is Small ribosomal subunit protein uS12 from Oleidesulfovibrio alaskensis (strain ATCC BAA-1058 / DSM 17464 / G20) (Desulfovibrio alaskensis).